A 160-amino-acid polypeptide reads, in one-letter code: Large ribosomal subunit protein eL21 (160 aa).

Basic and acidic residues-rich tracts occupy residues 112 to 123 (NDQKKKEAKEKG) and 136 to 146 (REAHFVRTNGK). Residues 112 to 146 (NDQKKKEAKEKGTWVQLNGQPAPPREAHFVRTNGK) are disordered.

The protein belongs to the eukaryotic ribosomal protein eL21 family. Component of the large ribosomal subunit.

It is found in the cytoplasm. The protein resides in the cytosol. Its subcellular location is the endoplasmic reticulum. Component of the large ribosomal subunit. The ribosome is a large ribonucleoprotein complex responsible for the synthesis of proteins in the cell. The polypeptide is Large ribosomal subunit protein eL21 (Rpl21) (Rattus norvegicus (Rat)).